The chain runs to 119 residues: Ribonuclease P protein component (119 aa).

This sequence belongs to the RnpA family. In terms of assembly, consists of a catalytic RNA component (M1 or rnpB) and a protein subunit.

It carries out the reaction Endonucleolytic cleavage of RNA, removing 5'-extranucleotides from tRNA precursor.. In terms of biological role, RNaseP catalyzes the removal of the 5'-leader sequence from pre-tRNA to produce the mature 5'-terminus. It can also cleave other RNA substrates such as 4.5S RNA. The protein component plays an auxiliary but essential role in vivo by binding to the 5'-leader sequence and broadening the substrate specificity of the ribozyme. The chain is Ribonuclease P protein component from Salmonella arizonae (strain ATCC BAA-731 / CDC346-86 / RSK2980).